We begin with the raw amino-acid sequence, 392 residues long: Stilbene synthase 6 (392 aa).

55-58 (KFNR) is a binding site for substrate. Residue Cys164 is part of the active site. Substrate-binding positions include Leu267 and 305 to 307 (GGP).

This sequence belongs to the thiolase-like superfamily. Chalcone/stilbene synthases family. As to quaternary structure, homodimer.

Its subcellular location is the cytoplasm. It catalyses the reaction 4-coumaroyl-CoA + 3 malonyl-CoA + 3 H(+) = trans-resveratrol + 4 CO2 + 4 CoA. Its pathway is phytoalexin biosynthesis; 3,4',5-trihydroxystilbene biosynthesis; 3,4',5-trihydroxystilbene from trans-4-coumarate: step 2/2. Functionally, mediates resistance to pathogens which are sensitive to stilbenes. This Vitis vinifera (Grape) protein is Stilbene synthase 6 (STS).